The following is a 317-amino-acid chain: Protoheme IX farnesyltransferase (317 aa).

Helical transmembrane passes span 29 to 49, 53 to 73, 102 to 122, 123 to 143, 151 to 171, 179 to 199, 224 to 241, 245 to 267, and 283 to 303; these read LILL…QGRV, LLLI…TINC, VFLA…FANL, LSAC…THWL, IVIG…AVTG, VLFG…AMLI, IFLY…LVYP, VSWG…AWQL, and FSIL…LLLP.

The protein belongs to the UbiA prenyltransferase family. Protoheme IX farnesyltransferase subfamily.

It localises to the cell inner membrane. The catalysed reaction is heme b + (2E,6E)-farnesyl diphosphate + H2O = Fe(II)-heme o + diphosphate. Its pathway is porphyrin-containing compound metabolism; heme O biosynthesis; heme O from protoheme: step 1/1. In terms of biological role, converts heme B (protoheme IX) to heme O by substitution of the vinyl group on carbon 2 of heme B porphyrin ring with a hydroxyethyl farnesyl side group. The polypeptide is Protoheme IX farnesyltransferase (Thermosynechococcus vestitus (strain NIES-2133 / IAM M-273 / BP-1)).